The chain runs to 122 residues: Large ribosomal subunit protein uL14c (122 aa).

Belongs to the universal ribosomal protein uL14 family. In terms of assembly, part of the 50S ribosomal subunit.

Its subcellular location is the plastid. It localises to the chloroplast. Functionally, binds to 23S rRNA. This chain is Large ribosomal subunit protein uL14c, found in Huperzia lucidula (Shining clubmoss).